The sequence spans 171 residues: Protein GrpE (171 aa).

The tract at residues 1–22 (MNHEHPDIESQQSAADAAAAAG) is disordered.

It belongs to the GrpE family. In terms of assembly, homodimer.

Its subcellular location is the cytoplasm. Functionally, participates actively in the response to hyperosmotic and heat shock by preventing the aggregation of stress-denatured proteins, in association with DnaK and GrpE. It is the nucleotide exchange factor for DnaK and may function as a thermosensor. Unfolded proteins bind initially to DnaJ; upon interaction with the DnaJ-bound protein, DnaK hydrolyzes its bound ATP, resulting in the formation of a stable complex. GrpE releases ADP from DnaK; ATP binding to DnaK triggers the release of the substrate protein, thus completing the reaction cycle. Several rounds of ATP-dependent interactions between DnaJ, DnaK and GrpE are required for fully efficient folding. The sequence is that of Protein GrpE from Stenotrophomonas maltophilia (strain R551-3).